The sequence spans 204 residues: Putative 3-methyladenine DNA glycosylase (204 aa).

Belongs to the DNA glycosylase MPG family.

This is Putative 3-methyladenine DNA glycosylase from Bacillus cytotoxicus (strain DSM 22905 / CIP 110041 / 391-98 / NVH 391-98).